The sequence spans 433 residues: tRNA-2-methylthio-N(6)-dimethylallyladenosine synthase (433 aa).

Residues 3-118 enclose the MTTase N-terminal domain; sequence KRLYIETLGC…IRDVIKQEKA (116 aa). Residues C12, C49, C81, C150, C154, and C157 each contribute to the [4Fe-4S] cluster site. Residues 136 to 371 form the Radical SAM core domain; sequence RTSPYKAFIN…LHLQMLDSIS (236 aa). In terms of domain architecture, TRAM spans 372–433; the sequence is EQEKDKVYEV…RLSLEGELVG (62 aa).

The protein belongs to the methylthiotransferase family. MiaB subfamily. In terms of assembly, monomer. [4Fe-4S] cluster serves as cofactor.

It localises to the cytoplasm. The catalysed reaction is N(6)-dimethylallyladenosine(37) in tRNA + (sulfur carrier)-SH + AH2 + 2 S-adenosyl-L-methionine = 2-methylsulfanyl-N(6)-dimethylallyladenosine(37) in tRNA + (sulfur carrier)-H + 5'-deoxyadenosine + L-methionine + A + S-adenosyl-L-homocysteine + 2 H(+). In terms of biological role, catalyzes the methylthiolation of N6-(dimethylallyl)adenosine (i(6)A), leading to the formation of 2-methylthio-N6-(dimethylallyl)adenosine (ms(2)i(6)A) at position 37 in tRNAs that read codons beginning with uridine. The protein is tRNA-2-methylthio-N(6)-dimethylallyladenosine synthase of Nitratiruptor sp. (strain SB155-2).